A 379-amino-acid chain; its full sequence is tRNA-specific 2-thiouridylase MnmA (379 aa).

ATP is bound by residues 9-16 (GLSGGVDS) and Met35. The interaction with target base in tRNA stretch occupies residues 95–97 (NPD). The active-site Nucleophile is the Cys100. A disulfide bridge connects residues Cys100 and Cys198. Gly124 lines the ATP pocket. The tract at residues 148–150 (KDQ) is interaction with tRNA. The Cysteine persulfide intermediate role is filled by Cys198. The interval 325–326 (RY) is interaction with tRNA.

Belongs to the MnmA/TRMU family.

It localises to the cytoplasm. It catalyses the reaction S-sulfanyl-L-cysteinyl-[protein] + uridine(34) in tRNA + AH2 + ATP = 2-thiouridine(34) in tRNA + L-cysteinyl-[protein] + A + AMP + diphosphate + H(+). Its function is as follows. Catalyzes the 2-thiolation of uridine at the wobble position (U34) of tRNA, leading to the formation of s(2)U34. This Acidovorax sp. (strain JS42) protein is tRNA-specific 2-thiouridylase MnmA.